The primary structure comprises 362 residues: Porin Omp2b (362 aa).

Positions 1–22 (MNIKSLLLGSAAALVAASGAQA) are cleaved as a signal peptide.

It belongs to the alphaproteobacteria porin family. In terms of assembly, homotrimer.

It localises to the cell outer membrane. In terms of biological role, forms passive diffusion pores that allow small molecular weight hydrophilic materials across the outer membrane. In Brucella melitensis biotype 1 (strain ATCC 23456 / CCUG 17765 / NCTC 10094 / 16M), this protein is Porin Omp2b (omp2b).